Here is a 312-residue protein sequence, read N- to C-terminus: Acetyl-coenzyme A carboxylase carboxyl transferase subunit alpha (312 aa).

The CoA carboxyltransferase C-terminal domain maps to Arg-36–Thr-286.

Belongs to the AccA family. Acetyl-CoA carboxylase is a heterohexamer composed of biotin carboxyl carrier protein (AccB), biotin carboxylase (AccC) and two subunits each of ACCase subunit alpha (AccA) and ACCase subunit beta (AccD).

Its subcellular location is the cytoplasm. The enzyme catalyses N(6)-carboxybiotinyl-L-lysyl-[protein] + acetyl-CoA = N(6)-biotinyl-L-lysyl-[protein] + malonyl-CoA. It participates in lipid metabolism; malonyl-CoA biosynthesis; malonyl-CoA from acetyl-CoA: step 1/1. In terms of biological role, component of the acetyl coenzyme A carboxylase (ACC) complex. First, biotin carboxylase catalyzes the carboxylation of biotin on its carrier protein (BCCP) and then the CO(2) group is transferred by the carboxyltransferase to acetyl-CoA to form malonyl-CoA. This chain is Acetyl-coenzyme A carboxylase carboxyl transferase subunit alpha, found in Helicobacter pylori (strain HPAG1).